The sequence spans 396 residues: 1-deoxy-D-xylulose 5-phosphate reductoisomerase (396 aa).

NADPH contacts are provided by T10, G11, S12, I13, Q38, and N124. Residue K125 coordinates 1-deoxy-D-xylulose 5-phosphate. E126 serves as a coordination point for NADPH. Position 150 (D150) interacts with Mn(2+). 4 residues coordinate 1-deoxy-D-xylulose 5-phosphate: S151, E152, S179, and H202. A Mn(2+)-binding site is contributed by E152. Residue G208 participates in NADPH binding. 1-deoxy-D-xylulose 5-phosphate-binding residues include S215, N220, K221, and E224. E224 lines the Mn(2+) pocket.

This sequence belongs to the DXR family. Requires Mg(2+) as cofactor. The cofactor is Mn(2+).

It catalyses the reaction 2-C-methyl-D-erythritol 4-phosphate + NADP(+) = 1-deoxy-D-xylulose 5-phosphate + NADPH + H(+). It participates in isoprenoid biosynthesis; isopentenyl diphosphate biosynthesis via DXP pathway; isopentenyl diphosphate from 1-deoxy-D-xylulose 5-phosphate: step 1/6. Functionally, catalyzes the NADPH-dependent rearrangement and reduction of 1-deoxy-D-xylulose-5-phosphate (DXP) to 2-C-methyl-D-erythritol 4-phosphate (MEP). The protein is 1-deoxy-D-xylulose 5-phosphate reductoisomerase of Ralstonia pickettii (strain 12J).